A 173-amino-acid chain; its full sequence is 3-hydroxydecanoyl-[acyl-carrier-protein] dehydratase (173 aa).

Residue His71 is part of the active site.

The protein belongs to the thioester dehydratase family. FabA subfamily. Homodimer.

The protein resides in the cytoplasm. It catalyses the reaction a (3R)-hydroxyacyl-[ACP] = a (2E)-enoyl-[ACP] + H2O. It carries out the reaction (3R)-hydroxydecanoyl-[ACP] = (2E)-decenoyl-[ACP] + H2O. The enzyme catalyses (2E)-decenoyl-[ACP] = (3Z)-decenoyl-[ACP]. Its pathway is lipid metabolism; fatty acid biosynthesis. Functionally, necessary for the introduction of cis unsaturation into fatty acids. Catalyzes the dehydration of (3R)-3-hydroxydecanoyl-ACP to E-(2)-decenoyl-ACP and then its isomerization to Z-(3)-decenoyl-ACP. Can catalyze the dehydratase reaction for beta-hydroxyacyl-ACPs with saturated chain lengths up to 16:0, being most active on intermediate chain length. The polypeptide is 3-hydroxydecanoyl-[acyl-carrier-protein] dehydratase (Bradyrhizobium sp. (strain BTAi1 / ATCC BAA-1182)).